Consider the following 669-residue polypeptide: DNA ligase (669 aa).

Residues 33-37 (DLTYD), 82-83 (SL), and Glu-115 contribute to the NAD(+) site. Lys-117 acts as the N6-AMP-lysine intermediate in catalysis. The NAD(+) site is built by Arg-138, Glu-172, Lys-286, and Lys-310. Cys-401, Cys-404, Cys-417, and Cys-422 together coordinate Zn(2+).

This sequence belongs to the NAD-dependent DNA ligase family. LigA subfamily. The cofactor is Mg(2+). Mn(2+) is required as a cofactor.

It catalyses the reaction NAD(+) + (deoxyribonucleotide)n-3'-hydroxyl + 5'-phospho-(deoxyribonucleotide)m = (deoxyribonucleotide)n+m + AMP + beta-nicotinamide D-nucleotide.. Functionally, DNA ligase that catalyzes the formation of phosphodiester linkages between 5'-phosphoryl and 3'-hydroxyl groups in double-stranded DNA using NAD as a coenzyme and as the energy source for the reaction. It is essential for DNA replication and repair of damaged DNA. This is DNA ligase from Borrelia hermsii (strain HS1 / DAH).